Here is a 159-residue protein sequence, read N- to C-terminus: Eukaryotic translation initiation factor 5A (159 aa).

The residue at position 51 (Lys51) is a Hypusine.

The protein belongs to the eIF-5A family. Post-translationally, lys-51 undergoes hypusination, a unique post-translational modification that consists in the addition of a butylamino group from spermidine to lysine side chain, leading to the formation of the unusual amino acid hypusine. eIF-5As are the only known proteins to undergo this modification, which is essential for their function.

It is found in the cytoplasm. Translation factor that promotes translation elongation and termination, particularly upon ribosome stalling at specific amino acid sequence contexts. Binds between the exit (E) and peptidyl (P) site of the ribosome and promotes rescue of stalled ribosome: specifically required for efficient translation of polyproline-containing peptides as well as other motifs that stall the ribosome. Acts as a ribosome quality control (RQC) cofactor by joining the RQC complex to facilitate peptidyl transfer during CAT tailing step. Functions as a regulator of autophagy. This is Eukaryotic translation initiation factor 5A from Drosophila melanogaster (Fruit fly).